Here is a 622-residue protein sequence, read N- to C-terminus: MSLDITKYPVLAQADTPDELRQLPQGVLPKLADELRSYLLQSVGISSGHFASGLGTVELTVALHYVYNTPFDRLIWDVGHQAYPHKILTGRRDKMPTIRQKGGIHPFPWREESEYDTFSVGHSGTSISAALAMAVAAEKEQAGRKVVAVIGDGAMTGGMVFEAMNHAGDLHNDMLVVLNDNEMSISENVGALNNHLAQLMSGRLYTTIRENSKKVLKGMPVIKEMAKRTEEHLKGMVVPGTMFEELGFNYIGPIDGHDVDALVETLRNMRNLSGPQILHIMTKKGRGYEPAEKDPIGWHAVPKFDPSTFAKPAAKPANPTFSQVFGRWLCDMAQKDDKVLGITPAMREGSGMVEFSQRFPNQYFDAAIAEQHAVTLAAGFACEGYKPVLAIYSTFLQRGYDQLIHDVALQKLPVIFAIDRGGIVGPDGPTHQGAFDLSYMRAIPNMVIMAPSDENECRQMLYTGYCYNEGPTAIRYPRGSATGEPQVETMTAYEIGKGLIKREGKKIAILNFGTTLASASQAAEALDATLADMRFVKPLDVELVKQLATSHDLLVTVEENAIMGGAGSGVLELLQQLKLPMPVLNIGLPDEFIKHGECGEILAELQLDGPGIEAQIRAYLAD.

Residues H80 and 121 to 123 (GHS) each bind thiamine diphosphate. D152 lines the Mg(2+) pocket. Residues 153-154 (GA), N181, Y288, and E370 each bind thiamine diphosphate. N181 is a Mg(2+) binding site.

The protein belongs to the transketolase family. DXPS subfamily. Homodimer. Mg(2+) serves as cofactor. Thiamine diphosphate is required as a cofactor.

It catalyses the reaction D-glyceraldehyde 3-phosphate + pyruvate + H(+) = 1-deoxy-D-xylulose 5-phosphate + CO2. Its pathway is metabolic intermediate biosynthesis; 1-deoxy-D-xylulose 5-phosphate biosynthesis; 1-deoxy-D-xylulose 5-phosphate from D-glyceraldehyde 3-phosphate and pyruvate: step 1/1. Its function is as follows. Catalyzes the acyloin condensation reaction between C atoms 2 and 3 of pyruvate and glyceraldehyde 3-phosphate to yield 1-deoxy-D-xylulose-5-phosphate (DXP). The polypeptide is 1-deoxy-D-xylulose-5-phosphate synthase (Shewanella loihica (strain ATCC BAA-1088 / PV-4)).